Here is a 322-residue protein sequence, read N- to C-terminus: Acetylglutamate kinase (322 aa).

Residues 89 to 90 (GG), Arg111, and Asn217 contribute to the substrate site.

This sequence belongs to the acetylglutamate kinase family. ArgB subfamily.

The protein localises to the cytoplasm. It carries out the reaction N-acetyl-L-glutamate + ATP = N-acetyl-L-glutamyl 5-phosphate + ADP. The protein operates within amino-acid biosynthesis; L-arginine biosynthesis; N(2)-acetyl-L-ornithine from L-glutamate: step 2/4. Functionally, catalyzes the ATP-dependent phosphorylation of N-acetyl-L-glutamate. This chain is Acetylglutamate kinase, found in Ehrlichia ruminantium (strain Welgevonden).